The chain runs to 190 residues: MNNNLQGDAIAAAIDVLNEERVIAYPTEAVFGVGCDPDSETAVMRLLELKRRPVDKGLILIAANYEQLKPYIDDTMLTDAQRETIFSRWPGPVTFVFPAPATTPRWLTGRFDSLAVRVTDHPLVVALCQAYGKPLVSTSANLSGLPPCRTVDEVRAQFGAAFPVVPGETGGRLNPSEIRDALTGELFRQG.

The 184-residue stretch at 7–190 (GDAIAAAIDV…ALTGELFRQG (184 aa)) folds into the YrdC-like domain.

It belongs to the SUA5 family. TsaC subfamily.

It localises to the cytoplasm. The enzyme catalyses L-threonine + hydrogencarbonate + ATP = L-threonylcarbamoyladenylate + diphosphate + H2O. Functionally, required for the formation of a threonylcarbamoyl group on adenosine at position 37 (t(6)A37) in tRNAs that read codons beginning with adenine. Catalyzes the conversion of L-threonine, HCO(3)(-)/CO(2) and ATP to give threonylcarbamoyl-AMP (TC-AMP) as the acyladenylate intermediate, with the release of diphosphate. In Escherichia coli O6:H1 (strain CFT073 / ATCC 700928 / UPEC), this protein is Threonylcarbamoyl-AMP synthase.